The primary structure comprises 100 residues: Integration host factor subunit alpha (100 aa).

The protein belongs to the bacterial histone-like protein family. In terms of assembly, heterodimer of an alpha and a beta chain.

In terms of biological role, this protein is one of the two subunits of integration host factor, a specific DNA-binding protein that functions in genetic recombination as well as in transcriptional and translational control. The sequence is that of Integration host factor subunit alpha (ihfA) from Zymomonas mobilis subsp. mobilis (strain ATCC 31821 / ZM4 / CP4).